Here is a 670-residue protein sequence, read N- to C-terminus: Leucine-rich repeat-containing protein 45 (670 aa).

LRR repeat units lie at residues threonine 58–arginine 80, valine 87–glycine 107, serine 115–phenylalanine 136, alanine 145–leucine 166, threonine 173–asparagine 194, and threonine 201–isoleucine 212. Positions arginine 252–glutamine 645 form a coiled coil. Position 661 is a phosphoserine; by NEK2 (serine 661).

As to quaternary structure, homomer. Interacts with CROCC/rootletin and CEP250. Interacts with CEP44. Interacts with CCDC102B (via N-terminus). In terms of processing, phosphorylated by NEK2 during misosis, phosphorylation reduces centrosomal localization which subsequently leads to centrosome separation.

The protein localises to the cytoplasm. Its subcellular location is the cytoskeleton. It is found in the microtubule organizing center. The protein resides in the centrosome. Component of the proteinaceous fiber-like linker between two centrioles, required for centrosome cohesion. The chain is Leucine-rich repeat-containing protein 45 (LRRC45) from Homo sapiens (Human).